The primary structure comprises 166 residues: MFLGYSDCVDPGLAVYRVSRSRLKLVLSFVWLVGLRLHDCAAFESCCYDITEAESNKAISRDKAAFTSSVSTRTPSLAIAPPPDRSMLLSREEELVPWSRLIITKQFYGGLIFHTTWVTGFVLLGLLTLFASLFRVPQSICRFCIDRLRDIARPLKYRYQRLVATV.

This sequence belongs to the RL11 family. In terms of assembly, interacts with host IQGAP1.

It is found in the host cytoplasm. May play a role in rearrangement of cellular cytoskeleton towards an efficient viral assembly and spreading. The sequence is that of Protein UL5 (UL5) from Human cytomegalovirus (strain AD169) (HHV-5).